The chain runs to 332 residues: UDP-3-O-acylglucosamine N-acyltransferase (332 aa).

Catalysis depends on His231, which acts as the Proton acceptor.

The protein belongs to the transferase hexapeptide repeat family. LpxD subfamily. As to quaternary structure, homotrimer.

The catalysed reaction is a UDP-3-O-[(3R)-3-hydroxyacyl]-alpha-D-glucosamine + a (3R)-hydroxyacyl-[ACP] = a UDP-2-N,3-O-bis[(3R)-3-hydroxyacyl]-alpha-D-glucosamine + holo-[ACP] + H(+). The protein operates within bacterial outer membrane biogenesis; LPS lipid A biosynthesis. In terms of biological role, catalyzes the N-acylation of UDP-3-O-acylglucosamine using 3-hydroxyacyl-ACP as the acyl donor. Is involved in the biosynthesis of lipid A, a phosphorylated glycolipid that anchors the lipopolysaccharide to the outer membrane of the cell. In Vesicomyosocius okutanii subsp. Calyptogena okutanii (strain HA), this protein is UDP-3-O-acylglucosamine N-acyltransferase.